The sequence spans 57 residues: Potassium channel toxin gamma-KTx 2.1 (57 aa).

Positions 1–21 (MKISFVLLLTLFICSIGWSEA) are cleaved as a signal peptide. 3 disulfides stabilise this stretch: Cys28–Cys49, Cys34–Cys54, and Cys38–Cys56.

This sequence belongs to the short scorpion toxin superfamily. Potassium channel inhibitor family. Gamma-KTx 2 subfamily. Expressed by the venom gland.

It localises to the secreted. Blocks human and/or rat Kv11.1/KCNH2/ERG1, Kv11.2/KCNH6/ERG2 and Kv11.3/KCNH7/ERG3 by binding to channel outer vestibule (S5P domain) with a 1:1 stoichiometry. Inhibition data are the following: hERG1 (reversible, Kd=7.7 nM, IC(50)=3.3 nM, IC(50)=11.9 nM), rERG1 (reversible, Kd=19 nM), hERG2 (reversible, Kd=77 nM), rERG2 (irreversible, Kd=4.2 nM), hERG3 (reversible, Kd=11.5 nM) and rERG3 (reversible, Kd=747 nM) potassium channels. Also has a minimal effect on rat ELK1/KCNH4 potassium channels (9% inhibition at 100 nM). Both this toxin and CnErgTx1 (AC Q86QT3) share mechanism of action and have overlapping binding sites on ERG1. The potency of these two toxins is not affected by elevating potassium ion concentration from 2 to 98 mM. In addition, at high toxin concentrations, block of ERG1 macroscopic currents by these two toxins is incomplete (88%). The blockade by this toxin is preferentially closed channel state-dependent, with a component of open, but not inactive state-dependent blockade. This toxin produces a concentration-dependent prolongation of QTc in the isolated rabbit heart (16.3% at 100 nM). This Mesobuthus eupeus (Lesser Asian scorpion) protein is Potassium channel toxin gamma-KTx 2.1.